Consider the following 336-residue polypeptide: Dihydroorotate dehydrogenase (quinone) (336 aa).

FMN-binding positions include Ala-62–Lys-66 and Thr-86. Lys-66 provides a ligand contact to substrate. Position 111–115 (Asn-111–Phe-115) interacts with substrate. FMN-binding residues include Asn-139 and Asn-172. Asn-172 is a binding site for substrate. Residue Ser-175 is the Nucleophile of the active site. Asn-177 is a substrate binding site. FMN contacts are provided by Lys-217 and Thr-245. Asn-246–Thr-247 provides a ligand contact to substrate. Residues Gly-268, Gly-297, and Tyr-318–Ser-319 each bind FMN.

The protein belongs to the dihydroorotate dehydrogenase family. Type 2 subfamily. In terms of assembly, monomer. The cofactor is FMN.

The protein resides in the cell membrane. The enzyme catalyses (S)-dihydroorotate + a quinone = orotate + a quinol. It functions in the pathway pyrimidine metabolism; UMP biosynthesis via de novo pathway; orotate from (S)-dihydroorotate (quinone route): step 1/1. In terms of biological role, catalyzes the conversion of dihydroorotate to orotate with quinone as electron acceptor. This Salmonella agona (strain SL483) protein is Dihydroorotate dehydrogenase (quinone).